Here is a 360-residue protein sequence, read N- to C-terminus: Peptide chain release factor 1 (360 aa).

Glutamine 235 is subject to N5-methylglutamine.

The protein belongs to the prokaryotic/mitochondrial release factor family. Post-translationally, methylated by PrmC. Methylation increases the termination efficiency of RF1.

Its subcellular location is the cytoplasm. Peptide chain release factor 1 directs the termination of translation in response to the peptide chain termination codons UAG and UAA. The chain is Peptide chain release factor 1 from Cupriavidus taiwanensis (strain DSM 17343 / BCRC 17206 / CCUG 44338 / CIP 107171 / LMG 19424 / R1) (Ralstonia taiwanensis (strain LMG 19424)).